The chain runs to 91 residues: Non-specific lipid-transfer protein 1 (91 aa).

Intrachain disulfides connect cysteine 3-cysteine 50, cysteine 13-cysteine 27, cysteine 28-cysteine 73, and cysteine 48-cysteine 87.

This sequence belongs to the plant LTP family.

In terms of biological role, plant non-specific lipid-transfer proteins transfer phospholipids as well as galactolipids across membranes. May play a role in wax or cutin deposition in the cell walls of expanding epidermal cells and certain secretory tissues. The polypeptide is Non-specific lipid-transfer protein 1 (Morus nigra (Black mulberry)).